Consider the following 318-residue polypeptide: Taste receptor type 2 member 60 (318 aa).

The Extracellular portion of the chain corresponds to 1 to 7 (MNGDHMV). Residues 8–28 (LGSSVTDKKAIILVTILLLLR) traverse the membrane as a helical segment. Residues 29–40 (LVAIAGNGFITA) lie on the Cytoplasmic side of the membrane. The chain crosses the membrane as a helical span at residues 41–61 (ALGVEWVLRRMLLPCDKLLVS). At 62-88 (LGASHFCLQSVVMGKTIYVFLYPMAFP) the chain is on the extracellular side. Residues 89–109 (YNPVLQFLAFQWDFLNAATLW) form a helical membrane-spanning segment. At 110 to 128 (FSTWLSVFYCVKIATFTHP) the chain is on the cytoplasmic side. Residues 129–149 (VFFWLKHKLSGWLPWMIFSYV) traverse the membrane as a helical segment. At 150-183 (GLSSFTTILFFIGNHRMYQNYLKNHLQPWNVTGN) the chain is on the extracellular side. The N-linked (GlcNAc...) asparagine glycan is linked to Asn-179. A helical transmembrane segment spans residues 184 to 204 (SIRSYCEKFYLFPLKMITWTM). Over 205 to 234 (PTAVFFICMILLITSLGRHMKKALLTTSGF) the chain is Cytoplasmic. A helical membrane pass occupies residues 235-255 (REPSVQAHIKALLALLSFAML). The Extracellular portion of the chain corresponds to 256 to 264 (FISYFLSLV). The helical transmembrane segment at 265-285 (FSAAGIFPPLDFKFWVWESVI) threads the bilayer. The Cytoplasmic segment spans residues 286–318 (YLCAAVHPIILLFSNCRLRAVLKSRRSSRCGTP).

Belongs to the G-protein coupled receptor T2R family.

It localises to the membrane. Receptor that may play a role in the perception of bitterness and is gustducin-linked. May play a role in sensing the chemical composition of the gastrointestinal content. The activity of this receptor may stimulate alpha gustducin, mediate PLC-beta-2 activation and lead to the gating of TRPM5. The sequence is that of Taste receptor type 2 member 60 (TAS2R60) from Pan paniscus (Pygmy chimpanzee).